Here is a 177-residue protein sequence, read N- to C-terminus: Thymidine kinase (177 aa).

11 to 18 (GPMFSGKS) contacts ATP. Residue Glu-83 is the Proton acceptor of the active site. Position 113 (Phe-113) interacts with substrate. Zn(2+)-binding residues include Cys-138 and Cys-141. A substrate-binding site is contributed by 157-161 (IELIG). Zn(2+) contacts are provided by Cys-170 and Cys-173.

It belongs to the thymidine kinase family.

It carries out the reaction thymidine + ATP = dTMP + ADP + H(+). The polypeptide is Thymidine kinase (TK) (Sheeppox virus (strain KS-1) (SPPV)).